The primary structure comprises 223 residues: Ribonuclease 3 (223 aa).

The region spanning 3 to 125 is the RNase III domain; that stretch reads LEKLQKKLGH…LIAAIYLDAG (123 aa). Glutamate 38 contacts Mg(2+). Aspartate 42 is an active-site residue. 2 residues coordinate Mg(2+): aspartate 111 and glutamate 114. Residue glutamate 114 is part of the active site. The 71-residue stretch at 152–222 folds into the DRBM domain; the sequence is DPKTRLQEFL…AQQAIEKLKI (71 aa).

It belongs to the ribonuclease III family. In terms of assembly, homodimer. Mg(2+) is required as a cofactor.

It is found in the cytoplasm. The enzyme catalyses Endonucleolytic cleavage to 5'-phosphomonoester.. Functionally, digests double-stranded RNA. Involved in the processing of primary rRNA transcript to yield the immediate precursors to the large and small rRNAs (23S and 16S). Processes some mRNAs, and tRNAs when they are encoded in the rRNA operon. Processes pre-crRNA and tracrRNA of type II CRISPR loci if present in the organism. This chain is Ribonuclease 3, found in Histophilus somni (strain 2336) (Haemophilus somnus).